The chain runs to 340 residues: N-acetyl-gamma-glutamyl-phosphate reductase (340 aa).

The active site involves Cys-148.

It belongs to the NAGSA dehydrogenase family. Type 1 subfamily.

Its subcellular location is the cytoplasm. The enzyme catalyses N-acetyl-L-glutamate 5-semialdehyde + phosphate + NADP(+) = N-acetyl-L-glutamyl 5-phosphate + NADPH + H(+). It functions in the pathway amino-acid biosynthesis; L-arginine biosynthesis; N(2)-acetyl-L-ornithine from L-glutamate: step 3/4. In terms of biological role, catalyzes the NADPH-dependent reduction of N-acetyl-5-glutamyl phosphate to yield N-acetyl-L-glutamate 5-semialdehyde. The chain is N-acetyl-gamma-glutamyl-phosphate reductase from Methanosarcina mazei (strain ATCC BAA-159 / DSM 3647 / Goe1 / Go1 / JCM 11833 / OCM 88) (Methanosarcina frisia).